The sequence spans 874 residues: MYQTTAALRSAFLEYFRTNGHQVVDSSSLVPVNDPTLLFTNAGMNQFKDVFLGEDKRSYTRATSSQRCVRAGGKHNDLDNVGYTARHHTFFEMLGNFSFGDYFKREAISFAWNFLTQELKLPKERLCVTIYETDDEAFDIWTKEIGVPAESLIRIGDNKGAPYASDNFWQMGDTGPCGPCSEIFYDHGDHIWGGRPGTPEEDGDRFIEIWNIVFMQYNRQASGEMLPLPKPSVDTGMGIERIAAIMQGVHSNYEIDIFQALIKKTAEILGVTDLENKSLRVISDHIRSCAFLIADGVMPSNEGRGYVLRRIIRRAVRHGNKLGATSSFFYKLVPTLIEVMGDAAKGLVETQAIVEKSLKAEEEQFARTLERGLGILDGALNELKGDVLDGETAFKLYDTYGFPVDLTADVCREREITVDEAGFEVAMAEQRSRAQAAGQFDTDYNDSLKIDEETHFSGYTELTAQGKVTAIYKAGESTDSLNAGEDAVIVLDSTPFYGESGGQCGDKGLLTAKGVEFDVKDTQKYGQAVGHQGTVNSGSISVGDTLEAIVDKKLRHRTELNHSVTHLLHAALRQLLGTHVTQKGSLVDAERLRFDFSHFEGVKPEELKAVEDLVNTQIRRNHKLSADVMDMDQAKERGAMALFGEKYTDEVRVVTMGDFSIELCGGTHVGRTGDIGLFKITSEGGIAAGVRRIEAVTGAAAMAYVAAQKAELDQAAALLKADSNSVVTKLKAQLDRTKLLEKELSQLKDKLAAATSADLAGEAKQVNGAKVLIKKLEGVDAGALRGLQDELKQKLGSGVVVLAIAGEAKVNLIVGVTKDLTAKVKAGELVASIAAQVGGKGGGRPDMAQAGGTEPEKLDGALEQVLPWLEERLA.

Zn(2+) contacts are provided by His562, His566, Cys664, and His668.

Belongs to the class-II aminoacyl-tRNA synthetase family. The cofactor is Zn(2+).

It localises to the cytoplasm. The enzyme catalyses tRNA(Ala) + L-alanine + ATP = L-alanyl-tRNA(Ala) + AMP + diphosphate. Functionally, catalyzes the attachment of alanine to tRNA(Ala) in a two-step reaction: alanine is first activated by ATP to form Ala-AMP and then transferred to the acceptor end of tRNA(Ala). Also edits incorrectly charged Ser-tRNA(Ala) and Gly-tRNA(Ala) via its editing domain. This is Alanine--tRNA ligase from Shewanella woodyi (strain ATCC 51908 / MS32).